A 153-amino-acid chain; its full sequence is Ribosome maturation factor RimP (153 aa).

It belongs to the RimP family.

The protein resides in the cytoplasm. Its function is as follows. Required for maturation of 30S ribosomal subunits. In Picosynechococcus sp. (strain ATCC 27264 / PCC 7002 / PR-6) (Agmenellum quadruplicatum), this protein is Ribosome maturation factor RimP.